The chain runs to 603 residues: Elongation factor 4 (603 aa).

Residues 7-189 (SRIRNFSIIA…SIVQLVPPPQ (183 aa)) form the tr-type G domain. Residues 19 to 24 (DHGKST) and 136 to 139 (NKID) contribute to the GTP site.

This sequence belongs to the TRAFAC class translation factor GTPase superfamily. Classic translation factor GTPase family. LepA subfamily.

Its subcellular location is the cell inner membrane. The catalysed reaction is GTP + H2O = GDP + phosphate + H(+). Functionally, required for accurate and efficient protein synthesis under certain stress conditions. May act as a fidelity factor of the translation reaction, by catalyzing a one-codon backward translocation of tRNAs on improperly translocated ribosomes. Back-translocation proceeds from a post-translocation (POST) complex to a pre-translocation (PRE) complex, thus giving elongation factor G a second chance to translocate the tRNAs correctly. Binds to ribosomes in a GTP-dependent manner. The chain is Elongation factor 4 from Microcystis aeruginosa (strain NIES-843 / IAM M-2473).